Reading from the N-terminus, the 308-residue chain is MTNLQERGHLLTELVNPNSLNLDQLSSLELVELFNSEDQKAVAAVAAAKVQLAEAIDSTAERLRHGGRLFYIGAGTSGRLGVLDAAECPPTFCTPPELVQGIIAGGAGALVRSSEDLEDSIEDGEAAIAGRHITQLDVVVGITAGGTTPYVHGAIHAARQRGASTIFIACVPAEQVSIDADIDIRLLTGPEIIAGSTRLKAGTVTKLALNMLSTGVMVKLGKVYGNRMVDVAVTNQKLRDRALRILQDLTGLSREAAGFLLERSGKWVKLALLMHWTGLEKDDGDRLLSEHQSNLRAAVMSYQNHNQS.

The 164-residue stretch at 59 to 222 folds into the SIS domain; it reads TAERLRHGGR…STGVMVKLGK (164 aa). Glu-87 functions as the Proton donor in the catalytic mechanism. Glu-118 is a catalytic residue.

It belongs to the GCKR-like family. MurNAc-6-P etherase subfamily. As to quaternary structure, homodimer.

The catalysed reaction is N-acetyl-D-muramate 6-phosphate + H2O = N-acetyl-D-glucosamine 6-phosphate + (R)-lactate. It participates in amino-sugar metabolism; N-acetylmuramate degradation. In terms of biological role, specifically catalyzes the cleavage of the D-lactyl ether substituent of MurNAc 6-phosphate, producing GlcNAc 6-phosphate and D-lactate. This chain is N-acetylmuramic acid 6-phosphate etherase, found in Nostoc punctiforme (strain ATCC 29133 / PCC 73102).